The following is a 540-amino-acid chain: Probable metabolite transport protein YFL040W (540 aa).

At 1–29 the chain is on the cytoplasmic side; sequence MTAMKAIVWRLPKMPKIKITKTYEVTKIT. A helical membrane pass occupies residues 30 to 50; the sequence is AILTLVGFIMGLEVPSLATFL. The Extracellular portion of the chain corresponds to 51-67; the sequence is TNKTFNEYFKYPTPLQQ. Residue N52 is glycosylated (N-linked (GlcNAc...) asparagine). A helical membrane pass occupies residues 68–88; the sequence is GLLMGSTPLGGIMGCFICCIM. At 89–101 the chain is on the cytoplasmic side; that stretch reads NDRFSRIYQFQSG. Residues 102 to 122 traverse the membrane as a helical segment; that stretch reads IIIWNIVTLLNFCIWDILGLL. The Extracellular portion of the chain corresponds to 123 to 126; it reads ICRM. Residues 127-147 form a helical membrane-spanning segment; it reads IKGMILGNFSILVASYANEVI. Topologically, residues 148–158 are cytoplasmic; it reads PRGKRGSTMSY. A helical transmembrane segment spans residues 159–179; the sequence is IQLCLTIGILVMHYLCIALSL. Over 180 to 187 the chain is Extracellular; sequence WDSHFAFR. The helical transmembrane segment at 188–208 threads the bilayer; that stretch reads IAWCIGIIPGLLFWMASYALP. Residues 209–275 are Cytoplasmic-facing; the sequence is ESYHWLVLHG…KKLPRGSFKP (67 aa). A helical transmembrane segment spans residues 276-296; it reads LILGMTLQLLVQFSGINIILG. Topologically, residues 297–313 are extracellular; sequence YITYICEIVGLEGNVKL. Residues 314–334 form a helical membrane-spanning segment; sequence FTSSIPYFINMVLSLLPITFI. At 335–341 the chain is on the cytoplasmic side; it reads DYTSRKL. The helical transmembrane segment at 342–362 threads the bilayer; sequence ITLLGGFPISGLLITIGALFV. At 363–385 the chain is on the extracellular side; the sequence is KYGQDTKPIDGNRSLVWSIGENP. Residue N374 is glycosylated (N-linked (GlcNAc...) asparagine). Residues 386 to 406 form a helical membrane-spanning segment; that stretch reads FVGGWILTLCFLIVGIFAMSL. At 407–428 the chain is on the cytoplasmic side; it reads SSIPWVYTNEMLPSRVKVKGFA. A helical membrane pass occupies residues 429 to 449; the sequence is ICVTFGWLGNFILTFLCPVMI. At 450–455 the chain is on the extracellular side; sequence ERLKGT. A helical transmembrane segment spans residues 456–476; sequence TFIIFGSLTFLISLSVLIWFP. Over 477 to 540 the chain is Cytoplasmic; it reads ETKGMSIEDI…KLKSDEEMII (64 aa). Residues 499-540 form a disordered region; that stretch reads NLHGEKGIKTPDSNSNGGSTRSSQEGQLHKPIKLKSDEEMII. The segment covering 509–524 has biased composition (polar residues); the sequence is PDSNSNGGSTRSSQEG.

Belongs to the major facilitator superfamily. Sugar transporter (TC 2.A.1.1) family.

Its subcellular location is the membrane. The sequence is that of Probable metabolite transport protein YFL040W from Saccharomyces cerevisiae (strain ATCC 204508 / S288c) (Baker's yeast).